Reading from the N-terminus, the 763-residue chain is 5-methyltetrahydropteroyltriglutamate--homocysteine methyltransferase (763 aa).

5-methyltetrahydropteroyltri-L-glutamate contacts are provided by residues 16-19 (RELK) and Lys117. L-homocysteine-binding positions include 440–442 (IGS) and Glu493. L-methionine is bound by residues 440-442 (IGS) and Glu493. 5-methyltetrahydropteroyltri-L-glutamate contacts are provided by residues 524-525 (RC) and Trp570. L-homocysteine is bound at residue Asp608. Asp608 is a binding site for L-methionine. Glu614 lines the 5-methyltetrahydropteroyltri-L-glutamate pocket. Positions 650, 652, and 674 each coordinate Zn(2+). His703 functions as the Proton donor in the catalytic mechanism. Cys735 contacts Zn(2+).

This sequence belongs to the vitamin-B12 independent methionine synthase family. It depends on Zn(2+) as a cofactor.

It catalyses the reaction 5-methyltetrahydropteroyltri-L-glutamate + L-homocysteine = tetrahydropteroyltri-L-glutamate + L-methionine. The protein operates within amino-acid biosynthesis; L-methionine biosynthesis via de novo pathway; L-methionine from L-homocysteine (MetE route): step 1/1. Functionally, catalyzes the transfer of a methyl group from 5-methyltetrahydrofolate to homocysteine resulting in methionine formation. The chain is 5-methyltetrahydropteroyltriglutamate--homocysteine methyltransferase from Alcanivorax borkumensis (strain ATCC 700651 / DSM 11573 / NCIMB 13689 / SK2).